Here is a 469-residue protein sequence, read N- to C-terminus: L-seryl-tRNA(Sec) selenium transferase (469 aa).

Lysine 298 carries the post-translational modification N6-(pyridoxal phosphate)lysine.

Belongs to the SelA family. Requires pyridoxal 5'-phosphate as cofactor.

Its subcellular location is the cytoplasm. It carries out the reaction L-seryl-tRNA(Sec) + selenophosphate + H(+) = L-selenocysteinyl-tRNA(Sec) + phosphate. It functions in the pathway aminoacyl-tRNA biosynthesis; selenocysteinyl-tRNA(Sec) biosynthesis; selenocysteinyl-tRNA(Sec) from L-seryl-tRNA(Sec) (bacterial route): step 1/1. Converts seryl-tRNA(Sec) to selenocysteinyl-tRNA(Sec) required for selenoprotein biosynthesis. The sequence is that of L-seryl-tRNA(Sec) selenium transferase from Nitratidesulfovibrio vulgaris (strain ATCC 29579 / DSM 644 / CCUG 34227 / NCIMB 8303 / VKM B-1760 / Hildenborough) (Desulfovibrio vulgaris).